A 410-amino-acid chain; its full sequence is E3 ubiquitin-protein ligase MARCHF4 (410 aa).

Residues 1 to 18 form the signal peptide; it reads MLMPLCGLLWWWWCCCSG. Residues 92-136 form a disordered region; the sequence is GPREVVGREPPPVPPPPPLPPSSVEDDWGGPATEPPASLLSSASS. The segment covering 100–112 has biased composition (pro residues); it reads EPPPVPPPPPLPP. A compositionally biased stretch (low complexity) spans 126–136; sequence PPASLLSSASS. The RING-CH-type zinc finger occupies 155–215; that stretch reads DSGMRTPLCR…ELCYYKYHVI (61 aa). Residues Cys163, Cys166, Cys179, Cys181, His189, Cys192, Cys205, and Cys208 each contribute to the Zn(2+) site. Transmembrane regions (helical) follow at residues 238-258 and 272-292; these read VAAAILGSLFLIASISWLIWS and LFQICYGMYGFMDVVCIGLII. 2 disordered regions span residues 324-372 and 390-410; these read EDQK…SGPL and PHEQRSPPGSSRELVMRVTTV. Positions 333–346 are enriched in polar residues; that stretch reads NPRTSSSTQANIPS. Low complexity predominate over residues 352 to 366; sequence AGTPAPEQGPAQAAG.

Expressed in brain and placenta.

Its subcellular location is the golgi apparatus membrane. It carries out the reaction S-ubiquitinyl-[E2 ubiquitin-conjugating enzyme]-L-cysteine + [acceptor protein]-L-lysine = [E2 ubiquitin-conjugating enzyme]-L-cysteine + N(6)-ubiquitinyl-[acceptor protein]-L-lysine.. It participates in protein modification; protein ubiquitination. Its function is as follows. E3 ubiquitin-protein ligase that may mediate ubiquitination of MHC-I and CD4, and promote their subsequent endocytosis and sorting to lysosomes via multivesicular bodies. E3 ubiquitin ligases accept ubiquitin from an E2 ubiquitin-conjugating enzyme in the form of a thioester and then directly transfer the ubiquitin to targeted substrates. This chain is E3 ubiquitin-protein ligase MARCHF4, found in Homo sapiens (Human).